Reading from the N-terminus, the 515-residue chain is Cytochrome P450 1A2 (515 aa).

Ser69 carries an O-linked (GlcNAc) serine glycan. Substrate is bound at residue Phe226. Residue Cys458 participates in heme binding.

The protein belongs to the cytochrome P450 family. As to quaternary structure, interacts with PGRMC1; the interaction requires PGRMC1 homodimerization. The cofactor is heme.

It localises to the endoplasmic reticulum membrane. It is found in the microsome membrane. It carries out the reaction an organic molecule + reduced [NADPH--hemoprotein reductase] + O2 = an alcohol + oxidized [NADPH--hemoprotein reductase] + H2O + H(+). The catalysed reaction is 17beta-estradiol + reduced [NADPH--hemoprotein reductase] + O2 = 2-hydroxy-17beta-estradiol + oxidized [NADPH--hemoprotein reductase] + H2O + H(+). The enzyme catalyses 17beta-estradiol + reduced [NADPH--hemoprotein reductase] + O2 = 4-hydroxy-17beta-estradiol + oxidized [NADPH--hemoprotein reductase] + H2O + H(+). It catalyses the reaction estrone + reduced [NADPH--hemoprotein reductase] + O2 = 2-hydroxyestrone + oxidized [NADPH--hemoprotein reductase] + H2O + H(+). It carries out the reaction estrone + reduced [NADPH--hemoprotein reductase] + O2 = 4-hydroxyestrone + oxidized [NADPH--hemoprotein reductase] + H2O + H(+). The catalysed reaction is cholesterol + reduced [NADPH--hemoprotein reductase] + O2 = 25-hydroxycholesterol + oxidized [NADPH--hemoprotein reductase] + H2O + H(+). The enzyme catalyses all-trans-retinol + reduced [NADPH--hemoprotein reductase] + O2 = all-trans-retinal + oxidized [NADPH--hemoprotein reductase] + 2 H2O + H(+). It catalyses the reaction all-trans-retinal + reduced [NADPH--hemoprotein reductase] + O2 = all-trans-retinoate + oxidized [NADPH--hemoprotein reductase] + H2O + 2 H(+). It carries out the reaction (5Z,8Z,11Z,14Z)-eicosatetraenoate + reduced [NADPH--hemoprotein reductase] + O2 = (14R,15S)-epoxy-(5Z,8Z,11Z)-eicosatrienoate + oxidized [NADPH--hemoprotein reductase] + H2O + H(+). The catalysed reaction is (5Z,8Z,11Z,14Z)-eicosatetraenoate + reduced [NADPH--hemoprotein reductase] + O2 = (14S,15R)-epoxy-(5Z,8Z,11Z)-eicosatrienoate + oxidized [NADPH--hemoprotein reductase] + H2O + H(+). The enzyme catalyses (5Z,8Z,11Z,14Z,17Z)-eicosapentaenoate + reduced [NADPH--hemoprotein reductase] + O2 = (17R,18S)-epoxy-(5Z,8Z,11Z,14Z)-eicosatetraenoate + oxidized [NADPH--hemoprotein reductase] + H2O + H(+). It catalyses the reaction (4Z,7Z,10Z,13Z,16Z,19Z)-docosahexaenoate + reduced [NADPH--hemoprotein reductase] + O2 = (19R,20S)-epoxy-(4Z,7Z,10Z,13Z,16Z)-docosapentaenoate + oxidized [NADPH--hemoprotein reductase] + H2O + H(+). It carries out the reaction (5S)-hydroperoxy-(6E,8Z,11Z,14Z)-eicosatetraenoate = 5-oxo-(6E,8Z,11Z,14Z)-eicosatetraenoate + H2O. The catalysed reaction is (12S)-hydroperoxy-(5Z,8Z,10E,14Z)-eicosatetraenoate = 12-oxo-(5Z,8Z,10E,14Z)-eicosatetraenoate + H2O. The enzyme catalyses (15S)-hydroperoxy-(5Z,8Z,11Z,13E)-eicosatetraenoate = 15-oxo-(5Z,8Z,11Z,13E)-eicosatetraenoate + H2O. It catalyses the reaction (13S)-hydroperoxy-(9Z,11E)-octadecadienoate = 13-oxo-(9Z,11E)-octadecadienoate + H2O. It carries out the reaction (5Z,8Z,11Z,14Z)-eicosatetraenoate + reduced [NADPH--hemoprotein reductase] + O2 = 13-hydroxy-(5Z,8Z,11Z,14Z)-eicosatetraenoate + oxidized [NADPH--hemoprotein reductase] + H2O + H(+). The catalysed reaction is (5Z,8Z,11Z,14Z)-eicosatetraenoate + reduced [NADPH--hemoprotein reductase] + O2 = 19-hydroxy-(5Z,8Z,11Z,14Z)-eicosatetraenoate + oxidized [NADPH--hemoprotein reductase] + H2O + H(+). The enzyme catalyses (9Z,12Z)-octadecadienoate + reduced [NADPH--hemoprotein reductase] + O2 = 11-hydroxy-(9Z,12Z)-octadecadienoate + oxidized [NADPH--hemoprotein reductase] + H2O + H(+). It participates in cofactor metabolism; retinol metabolism. It functions in the pathway steroid metabolism; cholesterol metabolism. Its pathway is lipid metabolism; arachidonate metabolism. Functionally, a cytochrome P450 monooxygenase involved in the metabolism of various endogenous substrates, including fatty acids, steroid hormones and vitamins. Mechanistically, uses molecular oxygen inserting one oxygen atom into a substrate, and reducing the second into a water molecule, with two electrons provided by NADPH via cytochrome P450 reductase (NADPH--hemoprotein reductase). Catalyzes the hydroxylation of carbon-hydrogen bonds. Exhibits high catalytic activity for the formation of hydroxyestrogens from estrone (E1) and 17beta-estradiol (E2), namely 2-hydroxy E1 and E2. Metabolizes cholesterol toward 25-hydroxycholesterol, a physiological regulator of cellular cholesterol homeostasis. May act as a major enzyme for all-trans retinoic acid biosynthesis in the liver. Catalyzes two successive oxidative transformation of all-trans retinol to all-trans retinal and then to the active form all-trans retinoic acid. Primarily catalyzes stereoselective epoxidation of the last double bond of polyunsaturated fatty acids (PUFA), displaying a strong preference for the (R,S) stereoisomer. Catalyzes bisallylic hydroxylation and omega-1 hydroxylation of PUFA. May also participate in eicosanoids metabolism by converting hydroperoxide species into oxo metabolites (lipoxygenase-like reaction, NADPH-independent). Plays a role in the oxidative metabolism of xenobiotics. Catalyzes the N-hydroxylation of heterocyclic amines and the O-deethylation of phenacetin. Metabolizes caffeine via N3-demethylation. In Cavia porcellus (Guinea pig), this protein is Cytochrome P450 1A2 (CYP1A2).